A 299-amino-acid polypeptide reads, in one-letter code: N-carbamoylputrescine amidase (299 aa).

In terms of domain architecture, CN hydrolase spans 10–268; that stretch reads VVVSSLQFAC…EAVLVAQFDL (259 aa). The active-site Proton acceptor is the Glu-49. The Proton donor role is filled by Lys-122. Cys-159 acts as the Nucleophile in catalysis.

Belongs to the carbon-nitrogen hydrolase superfamily. In terms of assembly, homooctamer (isoform 2). Expressed in roots, stems, leaves and flowers.

It catalyses the reaction N-carbamoylputrescine + H2O + 2 H(+) = putrescine + NH4(+) + CO2. It functions in the pathway amine and polyamine biosynthesis; putrescine biosynthesis via agmatine pathway; putrescine from N-carbamoylputrescine (amidase route): step 1/1. Functionally, involved in polyamine biosynthesis. Catalyzes the hydrolysis of N-carbamoylputrescine to produce putrescine and ammonia. In Arabidopsis thaliana (Mouse-ear cress), this protein is N-carbamoylputrescine amidase.